The following is a 658-amino-acid chain: Sodium/nucleoside cotransporter 1 (658 aa).

Residues Met-1–Ser-75 lie on the Cytoplasmic side of the membrane. A helical transmembrane segment spans residues Leu-76–Leu-99. Topologically, residues Asp-100–Ala-104 are extracellular. A helical transmembrane segment spans residues Leu-105 to Leu-123. Residues Lys-124–Gln-142 are Cytoplasmic-facing. The helical transmembrane segment at Leu-143–Trp-162 threads the bilayer. The Extracellular segment spans residues Leu-163–Gln-173. Residues Leu-174–Cys-190 form a helical membrane-spanning segment. The Cytoplasmic portion of the chain corresponds to Ser-191–Ala-196. Residues Val-197–Ile-217 form a helical membrane-spanning segment. Topologically, residues Arg-218–Val-256 are extracellular. A helical transmembrane segment spans residues Phe-257–Leu-278. The Cytoplasmic segment spans residues Gly-279–Ala-289. The helical transmembrane segment at Trp-290–Gly-313 threads the bilayer. Over Met-314 to Glu-332 the chain is Extracellular. A helical membrane pass occupies residues Ile-333–Phe-355. Over Gly-356 to Ser-361 the chain is Cytoplasmic. A helical transmembrane segment spans residues Leu-362 to Tyr-381. The Extracellular portion of the chain corresponds to Pro-382–Ala-418. The chain crosses the membrane as a helical span at residues Leu-419–Leu-441. The Cytoplasmic segment spans residues Ser-442 to Gly-452. Residues Leu-453 to Trp-474 traverse the membrane as a helical segment. At Thr-475 to Thr-529 the chain is on the extracellular side. The chain crosses the membrane as a helical span at residues Thr-530 to Val-553. Residues Pro-554–Val-564 are Cytoplasmic-facing. The chain crosses the membrane as a helical span at residues Ile-565 to Val-587. Over Pro-588–Ala-658 the chain is Extracellular. N-linked (GlcNAc...) asparagine glycosylation occurs at Asn-653.

It belongs to the concentrative nucleoside transporter (CNT) (TC 2.A.41) family. N-glycosylated. N-glycosylation is required for localization to the plasma membrane and the transporter activity.

It localises to the cell membrane. The protein localises to the apical cell membrane. The enzyme catalyses uridine(out) + Na(+)(out) = uridine(in) + Na(+)(in). It catalyses the reaction thymidine(out) + Na(+)(out) = thymidine(in) + Na(+)(in). It carries out the reaction cytidine(out) + Na(+)(out) = cytidine(in) + Na(+)(in). The catalysed reaction is adenosine(out) + Na(+)(out) = adenosine(in) + Na(+)(in). Due to its high apparent affinity but slow transport, adenosine could act as a negative regulator of pyrimidine transport under some conditions. Its function is as follows. Sodium and pyrimidine nucleoside symporter of the plasma membrane that imports uridine, thymidine and cytidine into cells by coupling their transport to the transmembrane sodium electrochemical gradient. Also transports adenosine, an atypical substrate transported with high apparent affinity, but low maximum velocity. Therefore, exhibits the transport characteristics of the nucleoside transport system cit or N2 subtype (N2/cit). Involved in renal nucleoside (re)absorption. The protein is Sodium/nucleoside cotransporter 1 (SLC28A1) of Oryctolagus cuniculus (Rabbit).